Here is a 276-residue protein sequence, read N- to C-terminus: Putative ripening-related protein 5 (276 aa).

An N-terminal signal peptide occupies residues 1–18; sequence MAMIFLLAALSTTHLASS.

This sequence belongs to the kiwellin family.

The protein resides in the secreted. The sequence is that of Putative ripening-related protein 5 from Oryza sativa subsp. japonica (Rice).